Consider the following 277-residue polypeptide: Phosphatidylglycerol--prolipoprotein diacylglyceryl transferase (277 aa).

4 helical membrane passes run I11 to F31, L55 to Y75, G93 to L113, and V117 to G137. Position 138 (R138) interacts with a 1,2-diacyl-sn-glycero-3-phospho-(1'-sn-glycerol). 3 helical membrane passes run P192 to F212, G220 to F240, and M256 to I276.

It belongs to the Lgt family.

The protein localises to the cell inner membrane. It catalyses the reaction L-cysteinyl-[prolipoprotein] + a 1,2-diacyl-sn-glycero-3-phospho-(1'-sn-glycerol) = an S-1,2-diacyl-sn-glyceryl-L-cysteinyl-[prolipoprotein] + sn-glycerol 1-phosphate + H(+). Its pathway is protein modification; lipoprotein biosynthesis (diacylglyceryl transfer). Functionally, catalyzes the transfer of the diacylglyceryl group from phosphatidylglycerol to the sulfhydryl group of the N-terminal cysteine of a prolipoprotein, the first step in the formation of mature lipoproteins. This chain is Phosphatidylglycerol--prolipoprotein diacylglyceryl transferase, found in Buchnera aphidicola subsp. Schizaphis graminum (strain Sg).